The primary structure comprises 406 residues: Phosphopentomutase (406 aa).

Residues Asp-10, Asp-305, His-310, Asp-346, His-347, and His-358 each contribute to the Mn(2+) site.

It belongs to the phosphopentomutase family. The cofactor is Mn(2+).

The protein localises to the cytoplasm. It catalyses the reaction 2-deoxy-alpha-D-ribose 1-phosphate = 2-deoxy-D-ribose 5-phosphate. It carries out the reaction alpha-D-ribose 1-phosphate = D-ribose 5-phosphate. It functions in the pathway carbohydrate degradation; 2-deoxy-D-ribose 1-phosphate degradation; D-glyceraldehyde 3-phosphate and acetaldehyde from 2-deoxy-alpha-D-ribose 1-phosphate: step 1/2. In terms of biological role, isomerase that catalyzes the conversion of deoxy-ribose 1-phosphate (dRib-1-P) and ribose 1-phosphate (Rib-1-P) to deoxy-ribose 5-phosphate (dRib-5-P) and ribose 5-phosphate (Rib-5-P), respectively. The polypeptide is Phosphopentomutase (Vibrio cholerae serotype O1 (strain ATCC 39315 / El Tor Inaba N16961)).